The primary structure comprises 33 residues: uncharacterized protein (33 aa).

A disordered region spans residues 1–33 (MQPGTGLSFDISQILKQGSDPKQKLPERQAIVL).

This is an uncharacterized protein from Caenorhabditis elegans.